We begin with the raw amino-acid sequence, 301 residues long: Probable alpha-L-glutamate ligase (301 aa).

An ATP-grasp domain is found at 104–287 (LQLLSRKGIG…VAGMIFDFIE (184 aa)). ATP-binding positions include lysine 141, 178–179 (EF), aspartate 187, and 211–213 (RSN). Positions 248, 260, and 262 each coordinate Mg(2+). Mn(2+)-binding residues include aspartate 248, glutamate 260, and asparagine 262.

The protein belongs to the RimK family. Requires Mg(2+) as cofactor. Mn(2+) is required as a cofactor.

In Vibrio parahaemolyticus serotype O3:K6 (strain RIMD 2210633), this protein is Probable alpha-L-glutamate ligase.